The sequence spans 249 residues: Probable phosphatase VV2_1469 (249 aa).

9 residues coordinate Zn(2+): His-8, His-10, His-16, His-41, Glu-74, His-102, His-132, Asp-194, and His-196.

Belongs to the PHP family. It depends on Zn(2+) as a cofactor.

The polypeptide is Probable phosphatase VV2_1469 (Vibrio vulnificus (strain CMCP6)).